The sequence spans 733 residues: Methylmalonyl-CoA mutase large subunit (733 aa).

Positions Met1–Glu10 are enriched in acidic residues. Positions Met1–Glu22 are disordered. (R)-methylmalonyl-CoA contacts are provided by Tyr78, Met81, Thr88, Arg90, Tyr92, and Ser117. Cob(II)alamin is bound by residues Phe120 and Ala142. Positions 198 and 200 each coordinate (R)-methylmalonyl-CoA. Residues Val209 and Arg210 each contribute to the cob(II)alamin site. Residues Arg210, His247, Arg286, and Ser288 each contribute to the (R)-methylmalonyl-CoA site. Residues Gly336, Glu373, Ala376, Gly612, His613, Asp614, Arg615, Ser658, Leu660, Gly689, and Thr712 each contribute to the cob(II)alamin site. Residues Arg600 to Glu732 form the B12-binding domain.

It belongs to the methylmalonyl-CoA mutase family. In terms of assembly, heterodimer of an alpha and a beta chain. Adenosylcob(III)alamin is required as a cofactor.

It carries out the reaction (R)-methylmalonyl-CoA = succinyl-CoA. Functionally, catalyzes the isomerization of succinyl-CoA to methylmalonyl-CoA during synthesis of propionate from tricarboxylic acid-cycle intermediates. This conversion most likely represents an important source of building blocks for polyketide antibiotic biosynthesis. It is unable to catalyze the conversion of isobutyryl-CoA into N-butyryl-CoA. The polypeptide is Methylmalonyl-CoA mutase large subunit (mutB) (Streptomyces virginiae (Streptomyces cinnamonensis)).